A 91-amino-acid polypeptide reads, in one-letter code: uncharacterized protein (91 aa).

Helical transmembrane passes span 5–27 (FFKY…TNFQ) and 47–69 (DFYH…FIFF).

Its subcellular location is the cell membrane. This is an uncharacterized protein from Archaeoglobus fulgidus (strain ATCC 49558 / DSM 4304 / JCM 9628 / NBRC 100126 / VC-16).